The following is a 508-amino-acid chain: Light-independent protochlorophyllide reductase subunit B (508 aa).

Residue aspartate 36 coordinates [4Fe-4S] cluster. Aspartate 294 acts as the Proton donor in catalysis. Residue glycine 429–methionine 430 participates in substrate binding.

Belongs to the ChlB/BchB/BchZ family. In terms of assembly, protochlorophyllide reductase is composed of three subunits; ChlL, ChlN and ChlB. Forms a heterotetramer of two ChlB and two ChlN subunits. [4Fe-4S] cluster is required as a cofactor.

It catalyses the reaction chlorophyllide a + oxidized 2[4Fe-4S]-[ferredoxin] + 2 ADP + 2 phosphate = protochlorophyllide a + reduced 2[4Fe-4S]-[ferredoxin] + 2 ATP + 2 H2O. It functions in the pathway porphyrin-containing compound metabolism; chlorophyll biosynthesis (light-independent). In terms of biological role, component of the dark-operative protochlorophyllide reductase (DPOR) that uses Mg-ATP and reduced ferredoxin to reduce ring D of protochlorophyllide (Pchlide) to form chlorophyllide a (Chlide). This reaction is light-independent. The NB-protein (ChlN-ChlB) is the catalytic component of the complex. The chain is Light-independent protochlorophyllide reductase subunit B from Trichormus variabilis (strain ATCC 29413 / PCC 7937) (Anabaena variabilis).